We begin with the raw amino-acid sequence, 177 residues long: Ribulose bisphosphate carboxylase small subunit, chloroplastic 5 (177 aa).

Residues 1 to 56 (MASSMMASTAAVARAGPAQSSMVAPFNGLRSSVAFPATRKANNDLSTLPSNGGRVS) constitute a chloroplast transit peptide.

This sequence belongs to the RuBisCO small chain family. Heterohexadecamer of 8 large and 8 small subunits.

The protein resides in the plastid. It localises to the chloroplast. In terms of biological role, ruBisCO catalyzes two reactions: the carboxylation of D-ribulose 1,5-bisphosphate, the primary event in carbon dioxide fixation, as well as the oxidative fragmentation of the pentose substrate. Both reactions occur simultaneously and in competition at the same active site. Although the small subunit is not catalytic it is essential for maximal activity. The chain is Ribulose bisphosphate carboxylase small subunit, chloroplastic 5 from Lemna gibba (Swollen duckweed).